Reading from the N-terminus, the 409-residue chain is Tyrosine--tRNA ligase (409 aa).

Tyr-35 is an L-tyrosine binding site. Residues 40–49 (CTAESLHVGS) carry the 'HIGH' region motif. Tyr-172 and Gln-176 together coordinate L-tyrosine. Residues 232 to 236 (KMGKT) carry the 'KMSKS' region motif. Position 235 (Lys-235) interacts with ATP. Residues 343–409 (ISILDLVILS…KKKHIKVELI (67 aa)) enclose the S4 RNA-binding domain.

It belongs to the class-I aminoacyl-tRNA synthetase family. TyrS type 1 subfamily. In terms of assembly, homodimer.

It is found in the cytoplasm. The enzyme catalyses tRNA(Tyr) + L-tyrosine + ATP = L-tyrosyl-tRNA(Tyr) + AMP + diphosphate + H(+). Functionally, catalyzes the attachment of tyrosine to tRNA(Tyr) in a two-step reaction: tyrosine is first activated by ATP to form Tyr-AMP and then transferred to the acceptor end of tRNA(Tyr). The protein is Tyrosine--tRNA ligase of Pelagibacter ubique (strain HTCC1062).